We begin with the raw amino-acid sequence, 166 residues long: Transcription elongation factor GreA (166 aa).

Belongs to the GreA/GreB family.

Its function is as follows. Necessary for efficient RNA polymerase transcription elongation past template-encoded arresting sites. The arresting sites in DNA have the property of trapping a certain fraction of elongating RNA polymerases that pass through, resulting in locked ternary complexes. Cleavage of the nascent transcript by cleavage factors such as GreA or GreB allows the resumption of elongation from the new 3'terminus. GreA releases sequences of 2 to 3 nucleotides. This chain is Transcription elongation factor GreA, found in Anaeromyxobacter sp. (strain K).